The primary structure comprises 88 residues: Small ribosomal subunit protein bS20 (88 aa).

Belongs to the bacterial ribosomal protein bS20 family.

Its function is as follows. Binds directly to 16S ribosomal RNA. The sequence is that of Small ribosomal subunit protein bS20 from Nitrobacter winogradskyi (strain ATCC 25391 / DSM 10237 / CIP 104748 / NCIMB 11846 / Nb-255).